Here is a 128-residue protein sequence, read N- to C-terminus: MRFAIVVTGPAYGTQQASSAFQFAQALIAEGHKLSSVFFYREGVYNANHLTSPASDEFDLVRGWQQLNAQHGVALNICVAAALRRGVVDEMEAGRLGLASSNLQQGFTLSGLGALAEASLTCDRVVQF.

Cys-78 acts as the Cysteine persulfide intermediate in catalysis.

The protein belongs to the DsrE/TusD family. As to quaternary structure, heterohexamer, formed by a dimer of trimers. The hexameric TusBCD complex contains 2 copies each of TusB, TusC and TusD. The TusBCD complex interacts with TusE.

It localises to the cytoplasm. Functionally, part of a sulfur-relay system required for 2-thiolation of 5-methylaminomethyl-2-thiouridine (mnm(5)s(2)U) at tRNA wobble positions. Accepts sulfur from TusA and transfers it in turn to TusE. This chain is Sulfurtransferase TusD, found in Escherichia coli O157:H7.